Consider the following 114-residue polypeptide: Anti-adapter protein IraM (114 aa).

It belongs to the IraM/RssC family.

Its subcellular location is the cytoplasm. In terms of biological role, involved in the stabilization of the sigma stress factor RpoS. The chain is Anti-adapter protein IraM from Citrobacter koseri (strain ATCC BAA-895 / CDC 4225-83 / SGSC4696).